Consider the following 663-residue polypeptide: RING finger protein 145 (663 aa).

The next 14 membrane-spanning stretches (helical) occupy residues 53–73, 77–97, 123–143, 146–166, 168–188, 205–222, 225–245, 275–295, 316–336, 340–360, 384–404, 410–430, 460–480, and 482–502; these read YLAL…LTLP, LVQL…HQIS, FTTA…VMKT, IWLF…VPLE, IVII…YFLG, LVQV…MSLW, LVVP…QIYS, YSLL…LTLC, TEGV…LQVV, FLLS…MLEI, SLCL…CQFF, LLII…TLFI, LLEF…TIFG, and WTVM…WLRA. A YLYF motif motif is present at residues 81–84; the sequence is YLYF. Cys537 is an active-site residue. An RING-type; atypical zinc finger spans residues 537-575; that stretch reads CAICYQDMKSAVITPCSHFFHAGCLKKWLYVQDTCPLCH. A disordered region spans residues 587–663; the sequence is LGTEAAPQPP…EGEVCPVESA (77 aa). A compositionally biased stretch (polar residues) spans 619–628; it reads GTGTQEGSGD.

As to quaternary structure, interacts (via YLYF motif) with INSIG1 and INSIG2.

The protein localises to the endoplasmic reticulum membrane. The catalysed reaction is S-ubiquitinyl-[E2 ubiquitin-conjugating enzyme]-L-cysteine + [acceptor protein]-L-lysine = [E2 ubiquitin-conjugating enzyme]-L-cysteine + N(6)-ubiquitinyl-[acceptor protein]-L-lysine.. E3 ubiquitin ligase that catalyzes the direct transfer of ubiquitin from E2 ubiquitin-conjugating enzyme to a specific substrate. In response to bacterial infection, negatively regulates the phagocyte oxidative burst by controlling the turnover of the NADPH oxidase complex subunits. Promotes monoubiquitination of CYBA and 'Lys-48'-linked polyubiquitination and degradation of CYBB NADPH oxidase catalytic subunits, both essential for the generation of antimicrobial reactive oxygen species. Involved in the maintenance of cholesterol homeostasis. In response to high sterol concentrations ubiquitinates HMGCR, a rate-limiting enzyme in cholesterol biosynthesis, and targets it for degradation. The interaction with INSIG1 is required for this function. In addition, triggers ubiquitination of SCAP, likely inhibiting its transport to the Golgi apparatus and the subsequent processing/maturation of SREBPF2, ultimately down-regulating cholesterol biosynthesis. The chain is RING finger protein 145 from Mus musculus (Mouse).